A 714-amino-acid chain; its full sequence is DNA ligase (714 aa).

Residues aspartate 47–aspartate 51, serine 96–leucine 97, and glutamate 130 contribute to the NAD(+) site. The active-site N6-AMP-lysine intermediate is the lysine 132. Residues arginine 153, glutamate 190, lysine 306, and lysine 330 each coordinate NAD(+). Positions 435, 438, 453, and 459 each coordinate Zn(2+). The region spanning arginine 636 to glycine 714 is the BRCT domain.

This sequence belongs to the NAD-dependent DNA ligase family. LigA subfamily. Requires Mg(2+) as cofactor. It depends on Mn(2+) as a cofactor.

It catalyses the reaction NAD(+) + (deoxyribonucleotide)n-3'-hydroxyl + 5'-phospho-(deoxyribonucleotide)m = (deoxyribonucleotide)n+m + AMP + beta-nicotinamide D-nucleotide.. DNA ligase that catalyzes the formation of phosphodiester linkages between 5'-phosphoryl and 3'-hydroxyl groups in double-stranded DNA using NAD as a coenzyme and as the energy source for the reaction. It is essential for DNA replication and repair of damaged DNA. The chain is DNA ligase from Nitrobacter hamburgensis (strain DSM 10229 / NCIMB 13809 / X14).